Here is a 67-residue protein sequence, read N- to C-terminus: UPF0435 protein SSP0913 (67 aa).

The protein belongs to the UPF0435 family.

This Staphylococcus saprophyticus subsp. saprophyticus (strain ATCC 15305 / DSM 20229 / NCIMB 8711 / NCTC 7292 / S-41) protein is UPF0435 protein SSP0913.